A 212-amino-acid polypeptide reads, in one-letter code: Kynurenine formamidase (212 aa).

Substrate is bound at residue Trp-18. Zn(2+) is bound by residues His-48, His-52, and Asp-54. His-58 serves as the catalytic Proton donor/acceptor. The Zn(2+) site is built by His-160 and Glu-172.

It belongs to the Cyclase 1 superfamily. KynB family. As to quaternary structure, homodimer. Zn(2+) is required as a cofactor.

It carries out the reaction N-formyl-L-kynurenine + H2O = L-kynurenine + formate + H(+). It functions in the pathway amino-acid degradation; L-tryptophan degradation via kynurenine pathway; L-kynurenine from L-tryptophan: step 2/2. Functionally, catalyzes the hydrolysis of N-formyl-L-kynurenine to L-kynurenine, the second step in the kynurenine pathway of tryptophan degradation. This chain is Kynurenine formamidase, found in Paraburkholderia xenovorans (strain LB400).